The following is a 234-amino-acid chain: MKNKNNKLADCPYITLEKALGYSFKDKHLLEQALTHKSCKLALNNERLEFLGDAVLGLVIGELLYHKFYQYDEGKLSKLRASIVSAQGFTKLARAISLQDYLRVSSSEETSKGREKPSILSSAFEALMAGVYLEAGLDKVRKIMQNLLNRAYKRLDLEHLSVDYKTALQELTQAQFCVIPTYQLLKEKGPAHHKEFEMVLYIQNQMYATAKGKSKKEAEQQCAYQALQKLKGIK.

The region spanning 13-136 is the RNase III domain; sequence YITLEKALGY…LMAGVYLEAG (124 aa). Glu49 lines the Mg(2+) pocket. Residue Asp53 is part of the active site. Positions 122 and 125 each coordinate Mg(2+). Residue Glu125 is part of the active site. The DRBM domain maps to 163-232; sequence DYKTALQELT…AYQALQKLKG (70 aa).

The protein belongs to the ribonuclease III family. Homodimer. It depends on Mg(2+) as a cofactor.

It localises to the cytoplasm. It catalyses the reaction Endonucleolytic cleavage to 5'-phosphomonoester.. Its function is as follows. Digests double-stranded RNA. Involved in the processing of primary rRNA transcript to yield the immediate precursors to the large and small rRNAs (23S and 16S). Processes some mRNAs, and tRNAs when they are encoded in the rRNA operon. Processes pre-crRNA and tracrRNA of type II CRISPR loci if present in the organism. The polypeptide is Ribonuclease 3 (Helicobacter acinonychis (strain Sheeba)).